The sequence spans 237 residues: Sensory rhodopsin-2 (237 aa).

Topologically, residues 1-2 (MA) are extracellular. A helical transmembrane segment spans residues 3-23 (LTTWFWVGAVGMLAGTVLPIR). Topologically, residues 24-31 (DCIRHPSH) are cytoplasmic. The chain crosses the membrane as a helical span at residues 32–53 (RRYDLVLAGITGLAAIAYTTMG). Residues 54 to 67 (LGITATTVGDRTVY) are Extracellular-facing. The chain crosses the membrane as a helical span at residues 68-89 (LARYIDWLVTTPLIVLYLAMLA). The Cytoplasmic segment spans residues 90–92 (RPG). The chain crosses the membrane as a helical span at residues 93-115 (HRTSAWLLAADVFVIAAGIAAAL). Residues 116-119 (TTGV) lie on the Extracellular side of the membrane. Residues 120-147 (QRWLFFAVGAAGYAALLYGLLGTLPRAL) traverse the membrane as a helical segment. Topologically, residues 148–150 (GDD) are cytoplasmic. The helical transmembrane segment at 151 to 178 (PRVRSLFVTLRNITVVLWTLYPVVWLLS) threads the bilayer. Topologically, residues 179 to 186 (PAGIGILQ) are extracellular. The helical transmembrane segment at 187 to 214 (TEMYTIVVVYLDFISKVAFVAFAVLGAD) threads the bilayer. Lys-202 is modified (N6-(retinylidene)lysine). Topologically, residues 215 to 237 (AVSRLVAADAAAPATAEPTPDGD) are cytoplasmic.

The protein belongs to the archaeal/bacterial/fungal opsin family. As to quaternary structure, interacts with HTR-II.

It localises to the cell membrane. Functionally, photophobic photoreceptor responsible for the negative phototaxis. Activates the sensory rhodopsin II transducer (HTR-II) in response to blue light. In Halobacterium salinarum (strain ATCC 700922 / JCM 11081 / NRC-1) (Halobacterium halobium), this protein is Sensory rhodopsin-2 (sop2).